Here is a 264-residue protein sequence, read N- to C-terminus: Glutamate racemase (264 aa).

Substrate contacts are provided by residues 10 to 11 and 42 to 43; these read DS and YG. Residue C73 is the Proton donor/acceptor of the active site. Residue 74 to 75 coordinates substrate; the sequence is NT. Catalysis depends on C183, which acts as the Proton donor/acceptor. 184–185 provides a ligand contact to substrate; the sequence is TH.

It belongs to the aspartate/glutamate racemases family.

The enzyme catalyses L-glutamate = D-glutamate. The protein operates within cell wall biogenesis; peptidoglycan biosynthesis. Its function is as follows. Provides the (R)-glutamate required for cell wall biosynthesis. This Streptococcus agalactiae serotype Ia (strain ATCC 27591 / A909 / CDC SS700) protein is Glutamate racemase.